Reading from the N-terminus, the 243-residue chain is Probable transcriptional regulatory protein BDI_1233 (243 aa).

This sequence belongs to the TACO1 family.

It localises to the cytoplasm. The protein is Probable transcriptional regulatory protein BDI_1233 of Parabacteroides distasonis (strain ATCC 8503 / DSM 20701 / CIP 104284 / JCM 5825 / NCTC 11152).